The sequence spans 151 residues: Pyruvoyl-dependent arginine decarboxylase (151 aa).

Pyruvic acid (Ser) is present on Ser42.

This sequence belongs to the PdaD family. It depends on pyruvate as a cofactor.

The catalysed reaction is L-arginine + H(+) = agmatine + CO2. This is Pyruvoyl-dependent arginine decarboxylase from Methanothermobacter thermautotrophicus (strain ATCC 29096 / DSM 1053 / JCM 10044 / NBRC 100330 / Delta H) (Methanobacterium thermoautotrophicum).